The following is a 1311-amino-acid chain: Sterol regulatory element-binding protein cleavage-activating protein (1311 aa).

At 1-18 (MPLIDKLRERISRAFYSH) the chain is on the cytoplasmic side. A helical membrane pass occupies residues 19–39 (GLLCASYPIPIIILTALCILA). At 40-277 (SCYPLLKLPL…HIVHVHFKEE (238 aa)) the chain is on the lumenal side. Residues 46-282 (KLPLPGTGPV…HFKEEIGIAE (237 aa)) form a loop-1 region. N-linked (GlcNAc...) asparagine glycans are attached at residues asparagine 242 and asparagine 261. Residues 278-298 (IGIAELIPLVTTYIILFAYIY) traverse the membrane as a helical segment. An SSD domain is found at 282 to 440 (ELIPLVTTYI…MFFFTTVLSI (159 aa)). The Cytoplasmic segment spans residues 299–310 (FSTRKIDLVKSK). A helical transmembrane segment spans residues 311 to 331 (WGLALAAVVTVLSSLLMSVGL). Residues 332-342 (CTLFGLTPTLN) lie on the Lumenal side of the membrane. The helical transmembrane segment at 343 to 363 (GGEIFPYLVVVIGLENVLVLT) threads the bilayer. Topologically, residues 364 to 399 (KSVVSTPVDLEVKLRIAQGLRNESWFIMKNMATELG) are cytoplasmic. A helical transmembrane segment spans residues 400-420 (IILIGYFTLVPAIQEFCLFAV). A topological domain (lumenal) is located at residue valine 421. Residues 422–442 (GLVSDFFLQMFFFTTVLSIDI) traverse the membrane as a helical segment. Residues 443–512 (RRMELADLNK…FFARTRLAQR (70 aa)) lie on the Cytoplasmic side of the membrane. The short motif at 445–450 (MELADL) is the ER export signal element. A helical transmembrane segment spans residues 513 to 533 (IIMAGTVVWIGILVYTDPAGL). Positions 529-726 (DPAGLRNYLT…QTPADVTLYK (198 aa)) are loop-7. The Lumenal portion of the chain corresponds to 534–723 (RNYLTVHVTE…TENQTPADVT (190 aa)). Residues asparagine 583 and asparagine 651 are each glycosylated (N-linked (GlcNAc...) asparagine). Residues 724–744 (LYKVAALGLASGIFLVLFFFL) form a helical membrane-spanning segment. Residues 745–1311 (LYRLLCPKNY…YVPSVLEKLD (567 aa)) are Cytoplasmic-facing. The segment at 747-1311 (RLLCPKNYGQ…YVPSVLEKLD (565 aa)) is interaction with srebf. WD repeat units follow at residues 790–827 (GHHM…CLTI), 997–1034 (SFES…LRCS), 1037–1076 (DGQS…NQLQ), 1109–1146 (AHRK…CLFT), 1149–1187 (GHSG…RVSH), 1190–1227 (GHRG…KLYS), and 1230–1267 (QDLG…LLQT).

Belongs to the WD repeat SCAP family. As to quaternary structure, membrane region forms a homotetramer. Component of the SCAP-SREBP complex (composed of SCAP and srebf1/srebp1 or srebf2/srebp2). Forms a ternary complex with insig1 or insig2 through its transmembrane domains at high sterol concentrations. Interacts with the SEC23-SEC24 complex.

It localises to the endoplasmic reticulum membrane. The protein localises to the golgi apparatus membrane. The protein resides in the cytoplasmic vesicle. It is found in the COPII-coated vesicle membrane. In terms of biological role, escort protein required for cholesterol as well as lipid homeostasis. Regulates export of the SCAP-SREBP complex from the endoplasmic reticulum to the Golgi upon low cholesterol, thereby regulating the processing of sterol regulatory element-binding proteins (SREBPs) SREBF1/SREBP1 and SREBF2/SREBP2. At high sterol concentrations, formation of a ternary complex with INSIG (INSIG1 or INSIG2) leads to mask the ER export signal in SCAP, promoting retention of the complex in the endoplasmic reticulum. Low sterol concentrations trigger release of INSIG, a conformational change in the SSD domain of SCAP, unmasking of the ER export signal, promoting recruitment into COPII-coated vesicles and transport of the SCAP-SREBP to the Golgi: in the Golgi, SREBPs are then processed, releasing the transcription factor fragment of SREBPs from the membrane, its import into the nucleus and up-regulation of LDLR, INSIG1 and the mevalonate pathway. Binds cholesterol via its SSD domain. In Xenopus laevis (African clawed frog), this protein is Sterol regulatory element-binding protein cleavage-activating protein.